The primary structure comprises 356 residues: DNA polymerase IV (356 aa).

The UmuC domain maps to 6-187 (IIHIDMDYFF…LDIGDFPGVG (182 aa)). D10 and D105 together coordinate Mg(2+). Residue E106 is part of the active site.

It belongs to the DNA polymerase type-Y family. Monomer. It depends on Mg(2+) as a cofactor.

The protein localises to the cytoplasm. The catalysed reaction is DNA(n) + a 2'-deoxyribonucleoside 5'-triphosphate = DNA(n+1) + diphosphate. In terms of biological role, poorly processive, error-prone DNA polymerase involved in untargeted mutagenesis. Copies undamaged DNA at stalled replication forks, which arise in vivo from mismatched or misaligned primer ends. These misaligned primers can be extended by PolIV. Exhibits no 3'-5' exonuclease (proofreading) activity. May be involved in translesional synthesis, in conjunction with the beta clamp from PolIII. The sequence is that of DNA polymerase IV from Staphylococcus aureus (strain MRSA252).